Consider the following 314-residue polypeptide: Lysophospholipase D GDPD1 (314 aa).

Over 1 to 3 (MSS) the chain is Extracellular. The helical transmembrane segment at 4–24 (TAAFCLLSTLGGYLVTSFLLL) threads the bilayer. Over 25–195 (KYPALLHQRK…VDKCYKENSD (171 aa)) the chain is Cytoplasmic. The GP-PDE domain occupies 40 to 309 (SRHISHRGGA…DYPTKLKEFL (270 aa)). 3 residues coordinate a divalent metal cation: glutamate 72, aspartate 74, and histidine 87. The chain crosses the membrane as a helical span at residues 196-216 (IPILFSLQRVLLILGLFFTGL). Residues 217–314 (LPFVPIREQF…LKEFLNNMSA (98 aa)) are Extracellular-facing.

It belongs to the glycerophosphoryl diester phosphodiesterase family.

Its subcellular location is the cytoplasm. The protein localises to the membrane. It is found in the perinuclear region. The protein resides in the endoplasmic reticulum. It carries out the reaction a 1-O-alkyl-sn-glycero-3-phosphocholine + H2O = a 1-O-alkyl-sn-glycero-3-phosphate + choline + H(+). The catalysed reaction is 1-hexadecanoyl-sn-glycero-3-phosphocholine + H2O = 1-hexadecanoyl-sn-glycero-3-phosphate + choline + H(+). The enzyme catalyses 1-hexadecanoyl-sn-glycero-3-phosphoethanolamine + H2O = 1-hexadecanoyl-sn-glycero-3-phosphate + ethanolamine + H(+). It catalyses the reaction N-hexadecanoyl-sn-glycero-3-phosphoethanolamine + H2O = N-hexadecanoylethanolamine + sn-glycerol 3-phosphate + H(+). It carries out the reaction N-(5Z,8Z,11Z,14Z-eicosatetraenoyl)-1-(9Z-octadecenoyl)-sn-glycero-3-phosphoethanolamine + H2O = N-(5Z,8Z,11Z,14Z-eicosatetraenoyl)-ethanolamine + 1-(9Z-octadecenoyl)-sn-glycero-3-phosphate + H(+). The catalysed reaction is N,1-di-(9Z-octadecenoyl)-sn-glycero-3-phosphoethanolamine + H2O = N-(9Z-octadecenoyl) ethanolamine + 1-(9Z-octadecenoyl)-sn-glycero-3-phosphate + H(+). The enzyme catalyses N-hexadecanoyl-1-(9Z-octadecenoyl)-sn-glycero-3-phosphoethanolamine + H2O = N-hexadecanoylethanolamine + 1-(9Z-octadecenoyl)-sn-glycero-3-phosphate + H(+). It catalyses the reaction 1-O-hexadecyl-sn-glycero-3-phosphocholine + H2O = 1-O-hexadecyl-sn-glycero-3-phosphate + choline + H(+). It carries out the reaction 1-(9Z-octadecenoyl)-sn-glycero-3-phosphocholine + H2O = 1-(9Z-octadecenoyl)-sn-glycero-3-phosphate + choline + H(+). The catalysed reaction is N,1-dihexadecanoyl-sn-glycero-3-phosphoethanolamine + H2O = N-hexadecanoylethanolamine + 1-hexadecanoyl-sn-glycero-3-phosphate + H(+). The enzyme catalyses 1-O-(1Z-octadecenyl)-sn-glycero-3-phospho-(N-5Z,8Z,11Z,14Z-eicosatetraenoyl)-ethanolamine + H2O = 1-O-(1Z-octadecenyl)-sn-glycero-3-phosphate + N-(5Z,8Z,11Z,14Z-eicosatetraenoyl)-ethanolamine + H(+). It catalyses the reaction 1-O-(1Z-octadecenyl)-sn-glycero-3-phospho-(N-9Z-octadecenoyl)-ethanolamine + H2O = 1-O-(1Z-octadecenyl)-sn-glycero-3-phosphate + N-(9Z-octadecenoyl) ethanolamine + H(+). It carries out the reaction 1-O-(1Z-octadecenyl)-sn-glycero-3-phospho-N-hexadecanoyl-ethanolamine + H2O = 1-O-(1Z-octadecenyl)-sn-glycero-3-phosphate + N-hexadecanoylethanolamine + H(+). Lysophospholipase D activity is increased by magnesium and manganese and inhibited by calcium in a concentration dependent manner. Loss of lysophospholipase D activity by addition of EDTA. In terms of biological role, hydrolyzes lysoglycerophospholipids to produce lysophosphatidic acid (LPA) and the corresponding amines. Shows a preference for 1-O-alkyl-sn-glycero-3-phosphocholine (lyso-PAF), lysophosphatidylethanolamine (lyso-PE) and lysophosphatidylcholine (lyso-PC). May be involved in bioactive N-acylethanolamine biosynthesis from both N-acyl-lysoplasmenylethanolamin (N-acyl-lysoPlsEt) and N-acyl-lysophosphatidylethanolamin (N-acyl-lysoPE). In addition, hydrolyzes glycerophospho-N-acylethanolamine to N-acylethanolamine. Does not display glycerophosphodiester phosphodiesterase activity, since it cannot hydrolyze either glycerophosphoinositol or glycerophosphocholine. This is Lysophospholipase D GDPD1 from Rattus norvegicus (Rat).